A 150-amino-acid chain; its full sequence is Large ribosomal subunit protein uL15 (150 aa).

The tract at residues 1–57 is disordered; the sequence is MTIKLESLQSNKGSRRKKMRKGRGIAAGQGASCGFGMRGQKSRSGRPTRPGFEGGQM. Over residues 13-23 the composition is skewed to basic residues; the sequence is GSRRKKMRKGR. The span at 25-37 shows a compositional bias: gly residues; it reads IAAGQGASCGFGM.

Belongs to the universal ribosomal protein uL15 family. Part of the 50S ribosomal subunit.

Its function is as follows. Binds to the 23S rRNA. The chain is Large ribosomal subunit protein uL15 from Prochlorococcus marinus (strain NATL1A).